The sequence spans 197 residues: MLYEMKPLGCEPAKLTGLSEKLIFSHYENNYGGAVKRLNAITATLAELDMATAPVFTLNGLKREELIATNSMILHEVYFDSLGDGGSLDGALKTAIERDFGSVERWQAEFTAMGKALGGGSGWVLLTYSPRDGRLVNQWASDHAHTLAGGTPVLALDMYEHSYHMDYGAKAAAYVDAFMQNIHWQRAATRFAAAVRD.

Fe cation contacts are provided by His-26, His-75, Asp-157, and His-161.

Belongs to the iron/manganese superoxide dismutase family. As to quaternary structure, homotetramer. Fe cation is required as a cofactor.

The catalysed reaction is 2 superoxide + 2 H(+) = H2O2 + O2. Its function is as follows. Destroys superoxide anion radicals which are normally produced within the cells and which are toxic to biological systems. The chain is Superoxide dismutase [Fe] from Cupriavidus metallidurans (strain ATCC 43123 / DSM 2839 / NBRC 102507 / CH34) (Ralstonia metallidurans).